The chain runs to 1409 residues: DNA-directed RNA polymerase subunit beta' (1409 aa).

The Zn(2+) site is built by C70, C72, C85, and C88. Residues D461, D463, and D465 each contribute to the Mg(2+) site. Zn(2+) contacts are provided by C820, C894, C901, and C904.

This sequence belongs to the RNA polymerase beta' chain family. In terms of assembly, the RNAP catalytic core consists of 2 alpha, 1 beta, 1 beta' and 1 omega subunit. When a sigma factor is associated with the core the holoenzyme is formed, which can initiate transcription. Mg(2+) is required as a cofactor. Requires Zn(2+) as cofactor.

It carries out the reaction RNA(n) + a ribonucleoside 5'-triphosphate = RNA(n+1) + diphosphate. In terms of biological role, DNA-dependent RNA polymerase catalyzes the transcription of DNA into RNA using the four ribonucleoside triphosphates as substrates. The sequence is that of DNA-directed RNA polymerase subunit beta' from Ralstonia nicotianae (strain ATCC BAA-1114 / GMI1000) (Ralstonia solanacearum).